A 249-amino-acid chain; its full sequence is 2,3-bisphosphoglycerate-dependent phosphoglycerate mutase (249 aa).

Residues 8 to 15 (RHGQSVWN), 21 to 22 (TG), Arg60, 87 to 90 (ERHY), Lys98, 114 to 115 (RR), and 183 to 184 (GN) contribute to the substrate site. Catalysis depends on His9, which acts as the Tele-phosphohistidine intermediate. Catalysis depends on Glu87, which acts as the Proton donor/acceptor.

It belongs to the phosphoglycerate mutase family. BPG-dependent PGAM subfamily. As to quaternary structure, homodimer.

The catalysed reaction is (2R)-2-phosphoglycerate = (2R)-3-phosphoglycerate. It functions in the pathway carbohydrate degradation; glycolysis; pyruvate from D-glyceraldehyde 3-phosphate: step 3/5. In terms of biological role, catalyzes the interconversion of 2-phosphoglycerate and 3-phosphoglycerate. This Solidesulfovibrio magneticus (strain ATCC 700980 / DSM 13731 / RS-1) (Desulfovibrio magneticus) protein is 2,3-bisphosphoglycerate-dependent phosphoglycerate mutase.